The chain runs to 545 residues: Chaperonin GroEL (545 aa).

Residues 29 to 32 (TLGP), Lys50, 86 to 90 (DGTTT), Gly413, and Asp495 each bind ATP.

This sequence belongs to the chaperonin (HSP60) family. In terms of assembly, forms a cylinder of 14 subunits composed of two heptameric rings stacked back-to-back. Interacts with the co-chaperonin GroES.

The protein resides in the cytoplasm. The enzyme catalyses ATP + H2O + a folded polypeptide = ADP + phosphate + an unfolded polypeptide.. Functionally, together with its co-chaperonin GroES, plays an essential role in assisting protein folding. The GroEL-GroES system forms a nano-cage that allows encapsulation of the non-native substrate proteins and provides a physical environment optimized to promote and accelerate protein folding. This is Chaperonin GroEL from Borreliella afzelii (strain PKo) (Borrelia afzelii).